Reading from the N-terminus, the 434-residue chain is D-amino acid dehydrogenase (434 aa).

3-17 (VVILGSGVVGVTSAW) serves as a coordination point for FAD.

This sequence belongs to the DadA oxidoreductase family. The cofactor is FAD.

The catalysed reaction is a D-alpha-amino acid + A + H2O = a 2-oxocarboxylate + AH2 + NH4(+). It participates in amino-acid degradation; D-alanine degradation; NH(3) and pyruvate from D-alanine: step 1/1. Functionally, oxidative deamination of D-amino acids. The protein is D-amino acid dehydrogenase of Yersinia pseudotuberculosis serotype O:3 (strain YPIII).